The chain runs to 2157 residues: Unconventional myosin-IXb (2157 aa).

Position 2 is an N-acetylserine (serine 2). The Ras-associating domain occupies 15 to 114 (AAYHLHIYPQ…YYFLLQERNA (100 aa)). Positions 146 to 953 (ADFDDLCNLP…ERQALQETLH (808 aa)) constitute a Myosin motor domain. An ATP-binding site is contributed by 239–246 (GESGSGKT). Residues 709 to 734 (AEKAAGMSSPGAQSHPEELPRGASTP) form a disordered region. Phosphoserine is present on residues serine 716 and serine 717. Residues 844-855 (KAEPFFIRCIRS) are actin-binding. The segment at 940–1044 (LKETERQALQ…CRGHLQRKSF (105 aa)) is neck or regulatory domain. IQ domains lie at 957 to 977 (VRKI…RHFL), 979 to 1000 (MKRA…RALE), 1001 to 1023 (RTQA…LYRH), and 1024 to 1053 (QKQS…EKQK). Serine 1045 carries the phosphoserine modification. A tail region spans residues 1045–2157 (SQMISEKQKA…LPPASGQTNG (1113 aa)). The stretch at 1046–1071 (QMISEKQKAEEKEREALEAARAGAEE) forms a coiled coil. 3 disordered regions span residues 1046-1298 (QMIS…TQIQ), 1320-1410 (AAAS…GSQV), and 1455-1484 (GLEA…KKNR). 5 stretches are compositionally biased toward basic and acidic residues: residues 1050–1063 (EKQK…EALE), 1109–1122 (SPLE…EAPS), 1136–1160 (ESHE…EHVK), 1168–1183 (SCKE…RRVT), and 1191–1201 (LEDKKESREDE). Serine 1114, serine 1115, and serine 1122 each carry phosphoserine. The segment covering 1211-1222 (ENTSQKQPTEQP) has biased composition (polar residues). A phosphoserine mark is found at serine 1242, serine 1253, serine 1261, and serine 1267. At threonine 1271 the chain carries Phosphothreonine. Serine 1290, serine 1323, and serine 1331 each carry phosphoserine. Position 1346 is a phosphothreonine (threonine 1346). 3 positions are modified to phosphoserine: serine 1354, serine 1356, and serine 1405. Residues 1467–1478 (AAGEKRTKEPGG) are compositionally biased toward basic and acidic residues. The Phorbol-ester/DAG-type zinc-finger motif lies at 1632–1681 (GHVFASYQVSIPQSCEQCLSYIWLMDKALLCSVCKMTCHKKCVHKIQSHC). Residues 1703–1888 (DSLTSDKASV…MLIKEQMRKY (186 aa)) form the Rho-GAP domain. The segment at 1739–1744 (AANRTR) is interaction with RHOA. Positions 1880–1901 (LIKEQMRKYKVKMEEISQLEAA) form a coiled coil. Phosphoserine is present on residues serine 1926, serine 1972, serine 1992, and serine 1999. The stretch at 1959 to 1989 (EDREKEILIERIQSIKEEKEDITYRLPELDP) forms a coiled coil. A compositionally biased stretch (basic and acidic residues) spans 1980-1993 (ITYRLPELDPRGSD). Residues 1980 to 2157 (ITYRLPELDP…LPPASGQTNG (178 aa)) form a disordered region. A Phosphothreonine modification is found at threonine 2005. Over residues 2021–2037 (PPAPALPCPGAPTPSPL) the composition is skewed to pro residues. Serine 2050 carries the phosphoserine modification. The span at 2081-2093 (PRWAPGAREAAAP) shows a compositional bias: low complexity. Basic and acidic residues predominate over residues 2095–2106 (RRREPPARRPDQ). Serine 2141 carries the phosphoserine modification.

The protein belongs to the TRAFAC class myosin-kinesin ATPase superfamily. Myosin family. As to quaternary structure, interacts (via IQ domains) with CALM. Interacts with RHOA. Interacts (via Rho-GAP domain) with ROBO1; this inhibits the interaction with RHOA and the stimulation of RHOA GTPase activity, and thereby increases the levels of active RHOA. In terms of tissue distribution, detected in peripheral blood leukocytes (at protein level). Expressed predominantly in peripheral blood leukocytes and at lower levels, in thymus, spleen, testis, prostate, ovary, brain, small intestine and lung.

It is found in the cytoplasm. Its subcellular location is the cell cortex. The protein localises to the perinuclear region. It localises to the cytoskeleton. Myosins are actin-based motor molecules with ATPase activity. Unconventional myosins serve in intracellular movements. Binds actin with high affinity both in the absence and presence of ATP and its mechanochemical activity is inhibited by calcium ions. Also acts as a GTPase activator for RHOA. Plays a role in the regulation of cell migration via its role as RHOA GTPase activator. This is regulated by its interaction with the SLIT2 receptor ROBO1; interaction with ROBO1 impairs interaction with RHOA and subsequent activation of RHOA GTPase activity, and thereby leads to increased levels of active, GTP-bound RHOA. The protein is Unconventional myosin-IXb (MYO9B) of Homo sapiens (Human).